Consider the following 414-residue polypeptide: Carboxynorspermidine synthase (414 aa).

Belongs to the saccharopine dehydrogenase family. Carboxynorspermidine synthase subfamily.

The enzyme catalyses carboxynorspermidine + NADP(+) + H2O = L-aspartate 4-semialdehyde + propane-1,3-diamine + NADPH + H(+). It catalyses the reaction carboxyspermidine + NADP(+) + H2O = L-aspartate 4-semialdehyde + putrescine + NADPH + H(+). In terms of biological role, involved in norspermidine biosynthesis. Catalyzes the synthesis of carboxynorspermidine from L-aspartate 4-semialdehyde and 1,3-diaminopropane. Is also active with putrescine as a substrate. Essential for biofilm formation. This is Carboxynorspermidine synthase from Vibrio cholerae serotype O1 (strain ATCC 39315 / El Tor Inaba N16961).